The sequence spans 386 residues: Succinate--CoA ligase [ADP-forming] subunit beta (386 aa).

Positions 9 to 244 constitute an ATP-grasp domain; that stretch reads KAILRSYGVS…LDEEDPKEIE (236 aa). Residues lysine 46, 53–55, glutamate 99, cysteine 102, and glutamate 107 contribute to the ATP site; that span reads GRG. The Mg(2+) site is built by asparagine 199 and aspartate 213. Substrate is bound by residues asparagine 264 and 321–323; that span reads GIM.

The protein belongs to the succinate/malate CoA ligase beta subunit family. Heterotetramer of two alpha and two beta subunits. Mg(2+) is required as a cofactor.

The enzyme catalyses succinate + ATP + CoA = succinyl-CoA + ADP + phosphate. The catalysed reaction is GTP + succinate + CoA = succinyl-CoA + GDP + phosphate. It functions in the pathway carbohydrate metabolism; tricarboxylic acid cycle; succinate from succinyl-CoA (ligase route): step 1/1. Functionally, succinyl-CoA synthetase functions in the citric acid cycle (TCA), coupling the hydrolysis of succinyl-CoA to the synthesis of either ATP or GTP and thus represents the only step of substrate-level phosphorylation in the TCA. The beta subunit provides nucleotide specificity of the enzyme and binds the substrate succinate, while the binding sites for coenzyme A and phosphate are found in the alpha subunit. This chain is Succinate--CoA ligase [ADP-forming] subunit beta, found in Bacillus cytotoxicus (strain DSM 22905 / CIP 110041 / 391-98 / NVH 391-98).